The following is a 223-amino-acid chain: 2-C-methyl-D-erythritol 4-phosphate cytidylyltransferase (223 aa).

The protein belongs to the IspD/TarI cytidylyltransferase family. IspD subfamily.

The enzyme catalyses 2-C-methyl-D-erythritol 4-phosphate + CTP + H(+) = 4-CDP-2-C-methyl-D-erythritol + diphosphate. It participates in isoprenoid biosynthesis; isopentenyl diphosphate biosynthesis via DXP pathway; isopentenyl diphosphate from 1-deoxy-D-xylulose 5-phosphate: step 2/6. Its function is as follows. Catalyzes the formation of 4-diphosphocytidyl-2-C-methyl-D-erythritol from CTP and 2-C-methyl-D-erythritol 4-phosphate (MEP). This chain is 2-C-methyl-D-erythritol 4-phosphate cytidylyltransferase, found in Prochlorococcus marinus subsp. pastoris (strain CCMP1986 / NIES-2087 / MED4).